Reading from the N-terminus, the 192-residue chain is Transcription termination/antitermination protein NusG (192 aa).

Residues 140–168 form the KOW domain; that stretch reads VGEIVTVTDGPFETFMGTVEEIDQEKNRL.

It belongs to the NusG family.

Participates in transcription elongation, termination and antitermination. This Rickettsia conorii (strain ATCC VR-613 / Malish 7) protein is Transcription termination/antitermination protein NusG.